We begin with the raw amino-acid sequence, 493 residues long: Glutamyl-tRNA(Gln) amidotransferase subunit A (493 aa).

Residues Lys81 and Ser156 each act as charge relay system in the active site. The Acyl-ester intermediate role is filled by Ser180.

It belongs to the amidase family. GatA subfamily. As to quaternary structure, heterotrimer of A, B and C subunits.

It catalyses the reaction L-glutamyl-tRNA(Gln) + L-glutamine + ATP + H2O = L-glutaminyl-tRNA(Gln) + L-glutamate + ADP + phosphate + H(+). In terms of biological role, allows the formation of correctly charged Gln-tRNA(Gln) through the transamidation of misacylated Glu-tRNA(Gln) in organisms which lack glutaminyl-tRNA synthetase. The reaction takes place in the presence of glutamine and ATP through an activated gamma-phospho-Glu-tRNA(Gln). The chain is Glutamyl-tRNA(Gln) amidotransferase subunit A from Mycobacterium ulcerans (strain Agy99).